The following is a 90-amino-acid chain: Gene 56 protein (90 aa).

The Glutaredoxin domain maps to 1-90 (MRTMFTPITI…DYYTASETGL (90 aa)). C16 and C19 are disulfide-bonded.

This chain is Gene 56 protein (56), found in Mycobacterium phage D29 (Mycobacteriophage D29).